A 638-amino-acid chain; its full sequence is Cytoplasmic dynein 1 intermediate chain 2 (638 aa).

Basic and acidic residues-rich tracts occupy residues 1 to 13 (MSDKSELKAELER) and 20 to 43 (QIREEKKRKEEERKKKETDQKKEA). Disordered regions lie at residues 1-135 (MSDK…GRGP) and 154-209 (VTYT…HELT). Ser-2 carries the N-acetylserine modification. Position 51 is a diphosphoserine (Ser-51). Ser-51 and Ser-90 each carry phosphoserine. Positions 88 to 97 (PSSKSVSTPS) are enriched in low complexity. Residue Thr-95 is modified to Phosphothreonine. Residues Ser-97, Ser-101, and Ser-104 each carry the phosphoserine modification. Residues 133-165 (RGPIKLGMAKITQVDFPPREIVTYTKETQTPVT) form an interaction with DYNLT1 region. A compositionally biased stretch (basic and acidic residues) spans 190 to 209 (EKILKKDEENDSKAPPHELT). WD repeat units follow at residues 277-326 (SKHR…TTPE), 330-370 (HCQS…RTPV), 379-420 (AHTH…HPQD), 429-469 (SKAV…AGIS), 474-519 (GHQG…PLYS), and 568-607 (EGNPALNRVRWTHSGREIAVGDSEGQIVIYDVGEQIAVPR).

It belongs to the dynein intermediate chain family. Homodimer. The cytoplasmic dynein 1 complex consists of two catalytic heavy chains (HCs) and a number of non-catalytic subunits presented by intermediate chains (ICs), light intermediate chains (LICs) and light chains (LCs); the composition seems to vary in respect to the IC, LIC and LC composition. The heavy chain homodimer serves as a scaffold for the probable homodimeric assembly of the respective non-catalytic subunits. The ICs and LICs bind directly to the HC dimer and the LCs assemble on the IC dimer. Interacts with DYNLT3. Interacts with DYNLT1. Interacts (dephosphorylated at Ser-90) with DCTN1. Interacts with BICD2. Interacts with SPEF2. Interacts with CFAP61. The phosphorylation status of Ser-90 appears to be involved in dynactin-dependent target binding. Post-translationally, pyrophosphorylation by 5-diphosphoinositol pentakisphosphate (5-IP7) promotes interaction with DCTN1. Serine pyrophosphorylation is achieved by Mg(2+)-dependent, but enzyme independent transfer of a beta-phosphate from a inositol pyrophosphate to a pre-phosphorylated serine residue. As to expression, skeletal muscle, testis, kidney, brain, heart and spleen.

Its subcellular location is the cytoplasm. The protein localises to the cytoskeleton. In terms of biological role, acts as one of several non-catalytic accessory components of the cytoplasmic dynein 1 complex that are thought to be involved in linking dynein to cargos and to adapter proteins that regulate dynein function. Cytoplasmic dynein 1 acts as a motor for the intracellular retrograde motility of vesicles and organelles along microtubules. The intermediate chains mediate the binding of dynein to dynactin via its 150 kDa component (p150-glued) DCTN1. Involved in membrane-transport, such as Golgi apparatus, late endosomes and lysosomes. This chain is Cytoplasmic dynein 1 intermediate chain 2 (Dync1i2), found in Rattus norvegicus (Rat).